Reading from the N-terminus, the 46-residue chain is Large ribosomal subunit protein bL33A (46 aa).

Belongs to the bacterial ribosomal protein bL33 family.

The protein is Large ribosomal subunit protein bL33A of Mesomycoplasma hyopneumoniae (strain 7448) (Mycoplasma hyopneumoniae).